The following is a 149-amino-acid chain: Myoglobin (149 aa).

Alanine 2 is modified (N-acetylalanine). Residues 2-143 (ADWDKVNSVW…ICSDIEKEYK (142 aa)) form the Globin domain. Histidine 89 is a heme b binding site.

This sequence belongs to the globin family. As to quaternary structure, monomeric.

The protein localises to the cytoplasm. It is found in the sarcoplasm. It carries out the reaction Fe(III)-heme b-[protein] + nitric oxide + H2O = Fe(II)-heme b-[protein] + nitrite + 2 H(+). The catalysed reaction is H2O2 + AH2 = A + 2 H2O. In terms of biological role, monomeric heme protein which primary function is to store oxygen and facilitate its diffusion within muscle tissues. Reversibly binds oxygen through a pentacoordinated heme iron and enables its timely and efficient release as needed during periods of heightened demand. Depending on the oxidative conditions of tissues and cells, and in addition to its ability to bind oxygen, it also has a nitrite reductase activity whereby it regulates the production of bioactive nitric oxide. Under stress conditions, like hypoxia and anoxia, it also protects cells against reactive oxygen species thanks to its pseudoperoxidase activity. The polypeptide is Myoglobin (mb) (Galeorhinus galeus (Tope shark)).